Consider the following 506-residue polypeptide: Maturase K (506 aa).

It belongs to the intron maturase 2 family. MatK subfamily.

Its subcellular location is the plastid. It localises to the chloroplast. Functionally, usually encoded in the trnK tRNA gene intron. Probably assists in splicing its own and other chloroplast group II introns. The polypeptide is Maturase K (Erica tetralix (Cross-leaved heath)).